We begin with the raw amino-acid sequence, 357 residues long: Snake venom metalloproteinase H4 (357 aa).

An N-terminal signal peptide occupies residues 1–6; it reads FPYQGS. Positions 7–176 are excised as a propeptide; it reads SIMLESGKVN…KKASQLIVST (170 aa). Residues 180–357 enclose the Peptidase M12B domain; the sequence is RYMEIVIVVD…EVIKYFLDSK (178 aa). His316 provides a ligand contact to Zn(2+). Glu317 is an active-site residue. Zn(2+)-binding residues include His320 and His326. An intrachain disulfide couples Cys333 to Cys339.

This sequence belongs to the venom metalloproteinase (M12B) family. P-I subfamily. In terms of assembly, monomer. The cofactor is Zn(2+). Expressed by the venom gland.

It is found in the secreted. Its function is as follows. Snake venom metalloproteinase that impairs hemostasis in the envenomed animal. The polypeptide is Snake venom metalloproteinase H4 (Deinagkistrodon acutus (Hundred-pace snake)).